A 548-amino-acid chain; its full sequence is 4-methyl-5-nitrocatechol 5-monooxygenase (548 aa).

Belongs to the PheA/TfdB FAD monooxygenase family. In terms of assembly, monomer. It depends on FAD as a cofactor.

It catalyses the reaction 4-methyl-5-nitrocatechol + NADPH + O2 = 2-hydroxy-5-methylquinone + nitrite + NADP(+) + H2O + H(+). The enzyme catalyses 4-methyl-5-nitrocatechol + NADH + O2 = 2-hydroxy-5-methylquinone + nitrite + NAD(+) + H2O + H(+). With respect to regulation, activated by magnesium or manganese ions. Inhibited by concentrations of 4-methyl-5-nitrocatechol (MNC) above 2 mM. In terms of biological role, involved in the degradation of 2,4-dinitrotoluene (2,4-DNT). Catalyzes the removal of the nitro group from 4-methyl-5-nitrocatechol (MNC) to yield 2-hydroxy-5-methylquinone. It can use both NADH and NADPH as electron donors, but prefers NADPH. Also able to use 4-nitrocatechol as substrate. This chain is 4-methyl-5-nitrocatechol 5-monooxygenase, found in Burkholderia sp.